Here is a 284-residue protein sequence, read N- to C-terminus: Large ribosomal subunit protein uL2 (284 aa).

Disordered regions lie at residues 28–50 and 232–284; these read ELEG…FKKS and RGTA…DRRK. Basic residues predominate over residues 36–46; it reads RSVRPNKKLSF. Residues 240–250 show a composition bias toward basic and acidic residues; the sequence is DHPHGGGEGRH. A compositionally biased stretch (basic residues) spans 264–284; that stretch reads KGLKTRDKRKSNKWIVKDRRK.

Belongs to the universal ribosomal protein uL2 family. Part of the 50S ribosomal subunit. Forms a bridge to the 30S subunit in the 70S ribosome.

Functionally, one of the primary rRNA binding proteins. Required for association of the 30S and 50S subunits to form the 70S ribosome, for tRNA binding and peptide bond formation. It has been suggested to have peptidyltransferase activity; this is somewhat controversial. Makes several contacts with the 16S rRNA in the 70S ribosome. The polypeptide is Large ribosomal subunit protein uL2 (Chlamydia muridarum (strain MoPn / Nigg)).